Reading from the N-terminus, the 263-residue chain is Kallikrein 1-related peptidase b27 (263 aa).

Positions 1 to 17 are cleaved as a signal peptide; it reads MRFLILFLALSLGGIDA. Residues 18–24 constitute a propeptide, activation peptide; it reads APPVQSR. In terms of domain architecture, Peptidase S1 spans 25–260; that stretch reads IIGGFKCKKN…FTSWIKDTMA (236 aa). Disulfide bonds link C31–C175, C50–C66, C154–C221, C186–C200, and C211–C236. H65 serves as the catalytic Charge relay system. N-linked (GlcNAc...) asparagine glycosylation is found at N69 and N105. D122 acts as the Charge relay system in catalysis. S215 functions as the Charge relay system in the catalytic mechanism.

It belongs to the peptidase S1 family. Kallikrein subfamily. In terms of tissue distribution, expressed in testis and submaxillary gland. Not expressed in heart, brain, spleen, lung, liver, muscle, kidney and ovary. In the testis, expression localized specifically to Leydig cells in the interstitial tissues.

Its activity is regulated as follows. Strongly inhibited by protease inhibitors diisopropyl fluorophosphate, phenylmethanesulfonyl fluoride and SBTI. In terms of biological role, serine protease with chymotrypsin-like cleavage specificity. Shows activity towards casein, gelatin, IGFBP3 and fibronectin but not towards laminin or collagens I and IV. Does not hydrolyze kininogin to release Lys-bradykinin. The protein is Kallikrein 1-related peptidase b27 (Klk1b27) of Mus musculus (Mouse).